The following is a 68-amino-acid chain: Molybdenum-pterin-binding protein 2 (68 aa).

A Mop domain is found at 2–68 (SISARNQLKG…VKSTDVMILA (67 aa)).

Binds one mole of molybdenum per mole of protein and contains a pterin. This Clostridium pasteurianum protein is Molybdenum-pterin-binding protein 2 (mopII).